Reading from the N-terminus, the 791-residue chain is uncharacterized protein (791 aa).

Transmembrane regions (helical) follow at residues M104–M124, I131–I151, A177–I197, and W226–L246. N-linked (GlcNAc...) asparagine glycosylation occurs at N265. The next 8 membrane-spanning stretches (helical) occupy residues F274 to A294, S309 to L329, W346 to L366, F421 to L441, V471 to T491, S501 to I521, A533 to F553, and L583 to T603. N621 carries an N-linked (GlcNAc...) asparagine glycan. A run of 3 helical transmembrane segments spans residues F653–I673, S697–I717, and A733–Y753. N-linked (GlcNAc...) asparagine glycosylation is present at N759.

This sequence belongs to the oligopeptide OPT transporter family.

It is found in the membrane. This is an uncharacterized protein from Schizosaccharomyces pombe (strain 972 / ATCC 24843) (Fission yeast).